A 98-amino-acid polypeptide reads, in one-letter code: Acylphosphatase (98 aa).

The Acylphosphatase-like domain occupies 12 to 98 (TYYVRVRGVV…ERRFERFQQQ (87 aa)). Residues R27 and N45 contribute to the active site.

The protein belongs to the acylphosphatase family.

It carries out the reaction an acyl phosphate + H2O = a carboxylate + phosphate + H(+). This Burkholderia vietnamiensis (strain G4 / LMG 22486) (Burkholderia cepacia (strain R1808)) protein is Acylphosphatase (acyP).